A 360-amino-acid polypeptide reads, in one-letter code: 3-dehydroquinate synthase (360 aa).

NAD(+) contacts are provided by residues 106–110 (GVIGD), 130–131 (TS), lysine 143, and lysine 152. Zn(2+) contacts are provided by glutamate 185, histidine 246, and histidine 262.

Belongs to the sugar phosphate cyclases superfamily. Dehydroquinate synthase family. Requires Co(2+) as cofactor. Zn(2+) serves as cofactor. NAD(+) is required as a cofactor.

Its subcellular location is the cytoplasm. It catalyses the reaction 7-phospho-2-dehydro-3-deoxy-D-arabino-heptonate = 3-dehydroquinate + phosphate. It functions in the pathway metabolic intermediate biosynthesis; chorismate biosynthesis; chorismate from D-erythrose 4-phosphate and phosphoenolpyruvate: step 2/7. Catalyzes the conversion of 3-deoxy-D-arabino-heptulosonate 7-phosphate (DAHP) to dehydroquinate (DHQ). The protein is 3-dehydroquinate synthase of Leuconostoc citreum (strain KM20).